Here is a 1076-residue protein sequence, read N- to C-terminus: DNA-directed RNA polymerase subunit beta (1076 aa).

The protein belongs to the RNA polymerase beta chain family. In terms of assembly, in plastids the minimal PEP RNA polymerase catalytic core is composed of four subunits: alpha, beta, beta', and beta''. When a (nuclear-encoded) sigma factor is associated with the core the holoenzyme is formed, which can initiate transcription.

The protein resides in the plastid. It is found in the chloroplast. The enzyme catalyses RNA(n) + a ribonucleoside 5'-triphosphate = RNA(n+1) + diphosphate. DNA-dependent RNA polymerase catalyzes the transcription of DNA into RNA using the four ribonucleoside triphosphates as substrates. This Hordeum vulgare (Barley) protein is DNA-directed RNA polymerase subunit beta.